The sequence spans 85 residues: Hepcidin (85 aa).

A signal peptide spans 1–24 (MKTFSVAVAVAVVLAFICLQESSA). A propeptide spanning residues 25 to 64 (VPVTEVQELEEPMSNEYQEMPVESWKMPYNNRHKRHSSPG) is cleaved from the precursor. Cystine bridges form between Cys66–Cys83, Cys69–Cys72, Cys70–Cys79, and Cys73–Cys82.

As to expression, predominantly expressed in liver.

It localises to the secreted. Functionally, seems to act as a signaling molecule involved in the maintenance of iron homeostasis. Seems to be required in conjunction with HFE to regulate both intestinal iron absorption and iron storage in macrophages. Antimicrobial activity against Gram-negative bacteria such as E.coli. This chain is Hepcidin (hamp), found in Morone chrysops x Morone saxatilis (White bass x Striped bass).